Consider the following 449-residue polypeptide: uncharacterized protein (449 aa).

Residues 1–13 (MPKAPKTKLHHAP) are compositionally biased toward basic residues. Residues 1-125 (MPKAPKTKLH…SQEEEEYEEL (125 aa)) form a disordered region. S22 carries the post-translational modification Phosphoserine. The segment covering 73–84 (KPSQISAFISNG) has biased composition (polar residues). S156 is modified (phosphoserine).

Belongs to the bystin family.

This is an uncharacterized protein from Schizosaccharomyces pombe (strain 972 / ATCC 24843) (Fission yeast).